The chain runs to 578 residues: PX domain-containing protein kinase-like protein (578 aa).

Residues 14 to 126 form the PX domain; that stretch reads LDDTVPLTAA…KFLDPNNYSA (113 aa). One can recognise a Protein kinase domain in the interval 88–481; that stretch reads FIAERQKGLQ…LENSEEHSAK (394 aa). Composition is skewed to basic residues over residues 437-448 and 457-469; these read IHQHRRLTRAQS and KKRKILARKKSKR. Disordered regions lie at residues 437–548 and 559–578; these read IHQH…NGMS and FQKGTLRKAKTCDHSAPKIG. Positions 483–513 are enriched in low complexity; that stretch reads SNSNNSAGSGASSPLTSPSSPTPPSTSGISA. The span at 514 to 530 shows a compositional bias: pro residues; that stretch reads LPPPPPPPPPPAAPLPP. One can recognise a WH2 domain in the interval 548–567; it reads SRGALLSSIQNFQKGTLRKA. A compositionally biased stretch (basic and acidic residues) spans 568 to 578; the sequence is KTCDHSAPKIG.

The protein belongs to the protein kinase superfamily. In terms of tissue distribution, widely expressed in all tissues examined except in heart. Isoform 1 is expressed in high levels in the brain, skeletal muscle, spleen and testis. Isoform 7 expression has yet to be demonstrated.

It localises to the cytoplasm. The protein localises to the cell membrane. Functionally, binds to and modulates brain Na,K-ATPase subunits ATP1B1 and ATP1B3 and may thereby participate in the regulation of electrical excitability and synaptic transmission. May not display kinase activity. The sequence is that of PX domain-containing protein kinase-like protein from Homo sapiens (Human).